The primary structure comprises 355 residues: Uroporphyrinogen decarboxylase (355 aa).

Residues arginine 38–arginine 42, aspartate 87, tyrosine 162, serine 217, and histidine 331 contribute to the substrate site.

It belongs to the uroporphyrinogen decarboxylase family. As to quaternary structure, homodimer.

Its subcellular location is the cytoplasm. The catalysed reaction is uroporphyrinogen III + 4 H(+) = coproporphyrinogen III + 4 CO2. The protein operates within porphyrin-containing compound metabolism; protoporphyrin-IX biosynthesis; coproporphyrinogen-III from 5-aminolevulinate: step 4/4. Its function is as follows. Catalyzes the decarboxylation of four acetate groups of uroporphyrinogen-III to yield coproporphyrinogen-III. This chain is Uroporphyrinogen decarboxylase, found in Streptomyces avermitilis (strain ATCC 31267 / DSM 46492 / JCM 5070 / NBRC 14893 / NCIMB 12804 / NRRL 8165 / MA-4680).